We begin with the raw amino-acid sequence, 696 residues long: Polyribonucleotide nucleotidyltransferase (696 aa).

Mg(2+) contacts are provided by Asp-486 and Asp-492. A KH domain is found at 553-612; that stretch reads PRIIVRNIPKDRIGELIGPGGKNVRGISELTGAELYIEDDGRVTISGSNQESAEKAAKMV. The S1 motif domain occupies 622–690; it reads GKIYEGKVKR…KTGKIDLSRK (69 aa).

The protein belongs to the polyribonucleotide nucleotidyltransferase family. Mg(2+) is required as a cofactor.

It localises to the cytoplasm. It catalyses the reaction RNA(n+1) + phosphate = RNA(n) + a ribonucleoside 5'-diphosphate. Functionally, involved in mRNA degradation. Catalyzes the phosphorolysis of single-stranded polyribonucleotides processively in the 3'- to 5'-direction. In Leptospira borgpetersenii serovar Hardjo-bovis (strain JB197), this protein is Polyribonucleotide nucleotidyltransferase.